The primary structure comprises 114 residues: Small ribosomal subunit protein bS16 (114 aa).

This sequence belongs to the bacterial ribosomal protein bS16 family.

This is Small ribosomal subunit protein bS16 from Prochlorococcus marinus subsp. pastoris (strain CCMP1986 / NIES-2087 / MED4).